We begin with the raw amino-acid sequence, 1897 residues long: Spectinabilin polyketide synthase system protein NorA (1897 aa).

The 425-residue stretch at Glu-112–Gln-536 folds into the Ketosynthase family 3 (KS3) domain. Active-site for beta-ketoacyl synthase activity residues include Cys-283, His-418, and His-458. The interval Ala-538 to His-563 is disordered. The segment covering Glu-540–Pro-553 has biased composition (basic and acidic residues). The Malonyl-CoA:ACP transacylase (MAT) domain maps to Phe-644–Ala-962. The segment at His-1012 to Pro-1139 is N-terminal hotdog fold. One can recognise a PKS/mFAS DH domain in the interval His-1012–His-1289. The active-site Proton acceptor; for dehydratase activity is the His-1045. The interval Ser-1113 to Arg-1152 is disordered. The segment at Ala-1151–His-1289 is C-terminal hotdog fold. Residue Asp-1211 is the Proton donor; for dehydratase activity of the active site. Residues Gly-1494 to Ala-1671 form the Ketoreductase (KR) domain. The Carrier domain maps to Ala-1777–Leu-1852. Ser-1812 carries the O-(pantetheine 4'-phosphoryl)serine modification. The segment at Pro-1854 to Asp-1873 is disordered. Over residues Ala-1862–Gln-1871 the composition is skewed to low complexity.

As to quaternary structure, the spectinabilin polyketide synthase complex is composed of 4 proteins, NorA, NorA', NorB and NorC. The complex comprises 6 modules with a total of 28 catalytic domains catalyzing 7 chain elongations. NorA comprises one module, NorA' two modules, NorB one module and NorC two modules. Pantetheine 4'-phosphate is required as a cofactor.

It catalyses the reaction 4-nitrobenzoyl-CoA + 6 (S)-methylmalonyl-CoA + malonyl-CoA + 6 NADPH + 12 H(+) = demethyldeoxyspectinabilin + 7 CO2 + 6 NADP(+) + 8 CoA + 5 H2O. Its pathway is antibiotic biosynthesis. The protein operates within polyketide biosynthesis. Component of a type I modular polyketide synthase (PKS) that generates the backbone of the antibiotic spectinabilin (also known as neoaureothin), a nitroaryl-substituted polyketide metabolite. This PKS system accepts the unusual starter unit 4-nitrobenzoyl-CoA and extends it by 6 molecules of (S)-methylmalonyl-CoA and a single molecule of malonyl-CoA. The first module, NorA, is used twice in an iterative fashion. The protein is Spectinabilin polyketide synthase system protein NorA of Streptomyces orinoci (Streptoverticillium orinoci).